The following is a 253-amino-acid chain: DNA polymerase sliding clamp 2 (253 aa).

The protein belongs to the PCNA family. Homotrimer. The subunits circularize to form a toroid; DNA passes through its center. Replication factor C (RFC) is required to load the toroid on the DNA. Interacts with TIP.

Inhibited by interaction with the PCNA inhibitor TIP. Functionally, sliding clamp subunit that acts as a moving platform for DNA processing. Responsible for tethering the catalytic subunit of DNA polymerase and other proteins to DNA during high-speed replication. In Thermococcus kodakarensis (strain ATCC BAA-918 / JCM 12380 / KOD1) (Pyrococcus kodakaraensis (strain KOD1)), this protein is DNA polymerase sliding clamp 2.